A 177-amino-acid polypeptide reads, in one-letter code: NADH-quinone oxidoreductase subunit B (177 aa).

[4Fe-4S] cluster-binding residues include C36, C37, C101, and C130.

Belongs to the complex I 20 kDa subunit family. As to quaternary structure, NDH-1 is composed of 14 different subunits. Subunits NuoB, C, D, E, F, and G constitute the peripheral sector of the complex. [4Fe-4S] cluster serves as cofactor.

The protein resides in the cell inner membrane. It carries out the reaction a quinone + NADH + 5 H(+)(in) = a quinol + NAD(+) + 4 H(+)(out). Its function is as follows. NDH-1 shuttles electrons from NADH, via FMN and iron-sulfur (Fe-S) centers, to quinones in the respiratory chain. The immediate electron acceptor for the enzyme in this species is believed to be ubiquinone. Couples the redox reaction to proton translocation (for every two electrons transferred, four hydrogen ions are translocated across the cytoplasmic membrane), and thus conserves the redox energy in a proton gradient. The chain is NADH-quinone oxidoreductase subunit B from Hydrogenobaculum sp. (strain Y04AAS1).